Consider the following 328-residue polypeptide: Methionine import ATP-binding protein MetN 1 (328 aa).

The 240-residue stretch at 2-241 folds into the ABC transporter domain; that stretch reads ISIERLSKTY…PLSRLGRSLL (240 aa). 38–45 provides a ligand contact to ATP; sequence GRSGAGKS.

This sequence belongs to the ABC transporter superfamily. Methionine importer (TC 3.A.1.24) family. In terms of assembly, the complex is composed of two ATP-binding proteins (MetN), two transmembrane proteins (MetI) and a solute-binding protein (MetQ).

The protein resides in the cell inner membrane. The catalysed reaction is L-methionine(out) + ATP + H2O = L-methionine(in) + ADP + phosphate + H(+). The enzyme catalyses D-methionine(out) + ATP + H2O = D-methionine(in) + ADP + phosphate + H(+). Its function is as follows. Part of the ABC transporter complex MetNIQ involved in methionine import. Responsible for energy coupling to the transport system. This Yersinia pestis bv. Antiqua (strain Nepal516) protein is Methionine import ATP-binding protein MetN 1.